Consider the following 408-residue polypeptide: Gustatory receptor 10a (408 aa).

Over 1–20 the chain is Cytoplasmic; sequence MTSPDERKSFWERHEFKFYR. A helical transmembrane segment spans residues 21-38; that stretch reads YGHVYALIYGQVVIDYVP. Over 39–48 the chain is Extracellular; that stretch reads QRALKRGVKV. Residues 49-69 traverse the membrane as a helical segment; the sequence is LLIAYGHLFSMLLIVVLPGYF. Topologically, residues 70–86 are cytoplasmic; the sequence is CYHFRTLTDTLDRRLQL. The helical transmembrane segment at 87 to 107 threads the bilayer; it reads LFYVSFTNTAIKYATVIVTYV. Over 108–144 the chain is Extracellular; the sequence is ANTVHFEAINQRCTMQRTHLEFEFKNAPQEPKRPFEF. Residues 145 to 165 form a helical membrane-spanning segment; it reads FMYFKFCLINLMMMIQVCGIF. Residues 166-270 are Cytoplasmic-facing; it reads AQYGEVGKGS…RESFRMHQFQ (105 aa). The chain crosses the membrane as a helical span at residues 271–291; the sequence is LIGLMLSTLINNLTNFYTLFH. Topologically, residues 292–304 are extracellular; that stretch reads MLAKQSLEEVSYP. Residues 305-325 traverse the membrane as a helical segment; it reads VVVGSVYATGFYIDTYIVALI. The Cytoplasmic segment spans residues 326 to 381; sequence NEHIKLELEAVALTMRRFAEPREMDERLTREIEHLSLELLNYQPPMLCGLLHLDRR. A helical transmembrane segment spans residues 382–402; the sequence is LVYLIAVTAFSYFITLVQFDL. Residues 403–408 lie on the Extracellular side of the membrane; the sequence is YLRKKS.

This sequence belongs to the insect chemoreceptor superfamily. Gustatory receptor (GR) family. Gr10a subfamily. In terms of tissue distribution, expressed in the medial aspect of the third antennal segment, and in neurons of the terminal external chemosensory organ of larvae.

The protein resides in the cell membrane. In terms of biological role, probable gustatory receptor which mediates acceptance or avoidance behavior, depending on its substrates. The protein is Gustatory receptor 10a (Gr10a) of Drosophila melanogaster (Fruit fly).